We begin with the raw amino-acid sequence, 42 residues long: Photosystem II reaction center protein J (42 aa).

A helical transmembrane segment spans residues 10–30 (IPLWLVATVAGLAVIALLGVF).

Belongs to the PsbJ family. As to quaternary structure, PSII is composed of 1 copy each of membrane proteins PsbA, PsbB, PsbC, PsbD, PsbE, PsbF, PsbH, PsbI, PsbJ, PsbK, PsbL, PsbM, PsbT, PsbX, PsbY, PsbZ, Psb30/Ycf12, at least 3 peripheral proteins of the oxygen-evolving complex and a large number of cofactors. It forms dimeric complexes.

The protein resides in the plastid. It localises to the chloroplast thylakoid membrane. In terms of biological role, one of the components of the core complex of photosystem II (PSII). PSII is a light-driven water:plastoquinone oxidoreductase that uses light energy to abstract electrons from H(2)O, generating O(2) and a proton gradient subsequently used for ATP formation. It consists of a core antenna complex that captures photons, and an electron transfer chain that converts photonic excitation into a charge separation. The chain is Photosystem II reaction center protein J from Chlorokybus atmophyticus (Soil alga).